The following is a 526-amino-acid chain: MSRKTVFPKVMCTQHPDSASKYIATQEEPGEAIEAAQIFGCDEYMPDYEGKATPYHQNVQVVSKFIEETDLIPGKDIIITPRAPSAVQENQFRQLMVMMSIAEANYNALEYSDVQAINEFVHPMTDSVREIIGAQQHMVDVSELAKKEFGFSMEVPCIIPLIEDAPALLHAKELAENTLFAWKGHFGTVPDKFRVFLGKSDSALSFGHVASTLSCKYAINGICELNSELDTQTGIIFGAGTLPFRGHLDLMNAENFFKEYRGVGTITLQSALRYSHKKGDAESLVKLAKARLPETPELFSAEEKEEIINLIGIFGASYSRIIRQLAPTINRIADLLPQQRDRLMHKGTGGYSRSAPDISGLVNLCRTDIGKELEASMPAEDLQLPRAIKFTGALYSIGLPPEFIGTGRALEEAREKLGEAACENLLTKYFPSLAGDLNFASEYLDLNVASRFLSSECLKEVSKDLDILHGAFALETSPEPSYRILVEMMQPDLLQAGSRGNCMDEEVSQLVCSTLTKMGKIRKALG.

Belongs to the PEPCase type 2 family. In terms of assembly, homotetramer. It depends on Mg(2+) as a cofactor.

It carries out the reaction oxaloacetate + phosphate = phosphoenolpyruvate + hydrogencarbonate. Its function is as follows. Catalyzes the irreversible beta-carboxylation of phosphoenolpyruvate (PEP) to form oxaloacetate (OAA), a four-carbon dicarboxylic acid source for the tricarboxylic acid cycle. The protein is Phosphoenolpyruvate carboxylase of Methanosarcina barkeri (strain Fusaro / DSM 804).